The sequence spans 400 residues: Acetate kinase (400 aa).

Position 10 (Asn-10) interacts with Mg(2+). Lys-17 contributes to the ATP binding site. Substrate is bound at residue Arg-91. Residue Asp-150 is the Proton donor/acceptor of the active site. ATP contacts are provided by residues 210–214, 285–287, and 333–337; these read HLGNG, DCR, and GIGEN. Mg(2+) is bound at residue Glu-387.

It belongs to the acetokinase family. Homodimer. Requires Mg(2+) as cofactor. Mn(2+) serves as cofactor.

Its subcellular location is the cytoplasm. It catalyses the reaction acetate + ATP = acetyl phosphate + ADP. It functions in the pathway metabolic intermediate biosynthesis; acetyl-CoA biosynthesis; acetyl-CoA from acetate: step 1/2. In terms of biological role, catalyzes the formation of acetyl phosphate from acetate and ATP. Can also catalyze the reverse reaction. The sequence is that of Acetate kinase from Erwinia tasmaniensis (strain DSM 17950 / CFBP 7177 / CIP 109463 / NCPPB 4357 / Et1/99).